Reading from the N-terminus, the 43-residue chain is Protein PsbN (43 aa).

The helical transmembrane segment at 4–24 (GILVVIFISCLLVSFTGYTIY) threads the bilayer.

The protein belongs to the PsbN family.

It is found in the plastid. The protein localises to the chloroplast thylakoid membrane. In terms of biological role, may play a role in photosystem I and II biogenesis. In Chaetosphaeridium globosum (Charophycean green alga), this protein is Protein PsbN.